The chain runs to 22 residues: Mu-conotoxin GIIIB (22 aa).

3 cysteine pairs are disulfide-bonded: C3-C15, C4-C20, and C10-C21. Residues P6 and P7 each carry the 4-hydroxyproline; partial modification. P17 is subject to 4-hydroxyproline. A22 carries the post-translational modification Alanine amide.

Belongs to the conotoxin M superfamily. As to expression, expressed by the venom duct.

The protein resides in the secreted. Mu-conotoxins block voltage-gated sodium channels (Nav). The protein is Mu-conotoxin GIIIB of Conus geographus (Geography cone).